Reading from the N-terminus, the 963-residue chain is Importin-13 (963 aa).

HEAT repeat units follow at residues 24–54 (ENVE…QAQV), 56–88 (PQAW…KISR), 95–135 (TDQY…LSMM), 142–179 (AVAD…EFQT), 194–231 (LAVE…SWVQ), 236–268 (LQDC…NAIS), 276–325 (VNTL…ALLD), 330–372 (WQSF…DDIL), 375–438 (EAEK…YEML), 440–476 (AELL…FQSI), 487–522 (VVPG…WLAD), 524–558 (PVMI…CREC), 562–600 (LPPY…LLSA), 603–648 (VEEN…SNLF), 676–716 (PVVV…VKTL), 720–754 (FAPM…VHIF), 761–803 (FPPI…ALKR), 815–845 (VKAV…TELL), 860–893 (EDGR…FALN), and 897–931 (FSLL…QQIL). Positions 45 to 111 (AQKWLMQAQV…KAHSFTQITR (67 aa)) constitute an Importin N-terminal domain.

It belongs to the importin beta family. In terms of assembly, interacts with UBC9, RAN, RBM8A, eIF-1A and PAX6. Expressed in fetal brain, heart, intestine and kidney.

It localises to the cytoplasm. The protein resides in the nucleus. In terms of biological role, functions in nuclear protein import as nuclear transport receptor. Serves as receptor for nuclear localization signals (NLS) in cargo substrates. Is thought to mediate docking of the importin/substrate complex to the nuclear pore complex (NPC) through binding to nucleoporin and the complex is subsequently translocated through the pore by an energy requiring, Ran-dependent mechanism. At the nucleoplasmic side of the NPC, Ran binds to the importin, the importin/substrate complex dissociates and importin is re-exported from the nucleus to the cytoplasm where GTP hydrolysis releases Ran. The directionality of nuclear import is thought to be conferred by an asymmetric distribution of the GTP- and GDP-bound forms of Ran between the cytoplasm and nucleus. Mediates the nuclear import of UBC9, the RBM8A/MAGOH complex, PAX6 and probably other members of the paired homeobox family. Also mediates nuclear export of eIF-1A, and the cytoplasmic release of eIF-1A is triggered by the loading of import substrates onto IPO13. The chain is Importin-13 (Ipo13) from Rattus norvegicus (Rat).